We begin with the raw amino-acid sequence, 340 residues long: Sulfotransferase 2B1 (340 aa).

67–72 (KSGTNW) serves as a coordination point for 3'-phosphoadenylyl sulfate. 2 residues coordinate substrate: Trp-95 and Trp-100. The active-site Proton acceptor is the His-122. Residues Arg-144, Ser-152, Tyr-207, 241–246 (SAFAAM), and 271–273 (RKG) contribute to the 3'-phosphoadenylyl sulfate site. The disordered stretch occupies residues 301-340 (LPSFPWDRSAEDGSPDGETEPSPSPSPGLASDDPNPGSSQ).

Belongs to the sulfotransferase 1 family. As to expression, isoform 1 is expressed in skin and testis. Higher level of isoform 2 expressed in skin and intestine, moderate level in the kidney, low level in liver, stomach and placenta.

Its subcellular location is the cytoplasm. The protein localises to the cytosol. It localises to the microsome. It is found in the nucleus. It catalyses the reaction an alcohol + 3'-phosphoadenylyl sulfate = an alkyl sulfate + adenosine 3',5'-bisphosphate + H(+). It carries out the reaction pregnenolone + 3'-phosphoadenylyl sulfate = pregnenolone sulfate + adenosine 3',5'-bisphosphate + H(+). The catalysed reaction is 3beta-hydroxyandrost-5-en-17-one + 3'-phosphoadenylyl sulfate = dehydroepiandrosterone 3-sulfate + adenosine 3',5'-bisphosphate + H(+). The enzyme catalyses cholesterol + 3'-phosphoadenylyl sulfate = cholesterol sulfate + adenosine 3',5'-bisphosphate + H(+). In terms of biological role, sulfotransferase that utilizes 3'-phospho-5'-adenylyl sulfate (PAPS) as sulfonate donor to catalyze the sulfate conjugation. Sulfonation increases the water solubility of most compounds, and therefore their renal excretion, but it can also result in bioactivation to form active metabolites. Sulfonates cholesterol. Catalyzes sulfation of the 3beta-hydroxyl groups of steroids, such as, pregnenolone and dehydroepiandrosterone (DHEA). Conjugates efficiently cholesterol but has a greater affinity for pregnenolone sulfation. Does not show high activity with DHEA. Plays a role in epidermal cholesterol metabolism and in the regulation of epidermal proliferation and differentiation. Its function is as follows. Prefers pregnenolone over DHEA as a substrate and does not sulfate cholesterol. The polypeptide is Sulfotransferase 2B1 (Rattus norvegicus (Rat)).